The chain runs to 416 residues: MAVTKLILFASALLLTALFIGVNASRSNETWHEHAVENPDEVAAMVDMSIRNSTERRRLGYFSCATGNPIDDCWRCDRKWQLRRKRLADCSIGFGRNAIGGRDGRFYVVTDPGDDDPVNPIPGTLRHAVIQDEPLWIIFKRDMVITLKQELIMNSFKTIDGRGVNVHIANGACLTIQYVTNIIVHGIHVHDCKPTGNAMVRSSPSHYGFRSMADGDAISIFGSSHIWIDHNSLSNCADGLVDAVMSSTAITVSNNFFTHHNEVMLLGHSDSYTRDKVMQVTIAYNHFGEGLIQRMPRCRHGYFHVVNNDYTHWEMYAIGGSAGPTINSQGNRFLAPVNPFAKEVTKREYTGESKWKHWNWRSEGDLFLNGAFFTRSGAGAGANYARASSLSAKSSSLVGTMTSYSGALNCRAGRRC.

The first 24 residues, M1 to A24, serve as a signal peptide directing secretion. Residues N23, N28, and N52 are each glycosylated (N-linked (GlcNAc...) asparagine). Ca(2+) contacts are provided by D214, D238, and D242. R294 is an active-site residue.

This sequence belongs to the polysaccharide lyase 1 family. It depends on Ca(2+) as a cofactor.

The enzyme catalyses Eliminative cleavage of (1-&gt;4)-alpha-D-galacturonan to give oligosaccharides with 4-deoxy-alpha-D-galact-4-enuronosyl groups at their non-reducing ends.. The protein operates within glycan metabolism; pectin degradation; 2-dehydro-3-deoxy-D-gluconate from pectin: step 2/5. The protein is Probable pectate lyase 8 of Arabidopsis thaliana (Mouse-ear cress).